A 1171-amino-acid chain; its full sequence is DNA polymerase catalytic subunit (1171 aa).

Disordered regions lie at residues 647–687, 704–735, and 1149–1171; these read GTPA…PFRT, PGGG…EPAP, and VEEE…DSSR. Residues 649–662 are compositionally biased toward pro residues; sequence PARPPETPARPPET. Composition is skewed to low complexity over residues 663–674 and 709–725; these read PAAGPSGAAHAG and VSSA…PSET. Residues 1149–1158 show a composition bias toward basic and acidic residues; the sequence is VEEEVCESER.

This sequence belongs to the DNA polymerase type-B family.

It localises to the host nucleus. The enzyme catalyses DNA(n) + a 2'-deoxyribonucleoside 5'-triphosphate = DNA(n+1) + diphosphate. The sequence is that of DNA polymerase catalytic subunit (DPOL) from Tupaia belangeri (Common tree shrew).